Reading from the N-terminus, the 271-residue chain is 3-methyl-2-oxobutanoate hydroxymethyltransferase 1 (271 aa).

Mg(2+) is bound by residues D53 and D92. 3-methyl-2-oxobutanoate contacts are provided by residues 53-54 (DS), D92, and K120. Residue E122 participates in Mg(2+) binding. Catalysis depends on E189, which acts as the Proton acceptor.

This sequence belongs to the PanB family. Homodecamer; pentamer of dimers. It depends on Mg(2+) as a cofactor.

The protein localises to the cytoplasm. It catalyses the reaction 3-methyl-2-oxobutanoate + (6R)-5,10-methylene-5,6,7,8-tetrahydrofolate + H2O = 2-dehydropantoate + (6S)-5,6,7,8-tetrahydrofolate. Its pathway is cofactor biosynthesis; (R)-pantothenate biosynthesis; (R)-pantoate from 3-methyl-2-oxobutanoate: step 1/2. Its function is as follows. Catalyzes the reversible reaction in which hydroxymethyl group from 5,10-methylenetetrahydrofolate is transferred onto alpha-ketoisovalerate to form ketopantoate. The polypeptide is 3-methyl-2-oxobutanoate hydroxymethyltransferase 1 (Burkholderia ambifaria (strain ATCC BAA-244 / DSM 16087 / CCUG 44356 / LMG 19182 / AMMD) (Burkholderia cepacia (strain AMMD))).